The primary structure comprises 185 residues: uncharacterized protein (185 aa).

This is an uncharacterized protein from Bacillus subtilis (strain 168).